Here is a 529-residue protein sequence, read N- to C-terminus: CTP synthase (529 aa).

Residues 1 to 270 (MKYIVVTGGV…ADVVCSYLSL (270 aa)) are amidoligase domain. Serine 12 lines the CTP pocket. Serine 12 provides a ligand contact to UTP. ATP contacts are provided by residues 13-18 (GLGKGI) and aspartate 70. Mg(2+)-binding residues include aspartate 70 and glutamate 145. CTP is bound by residues 152–154 (DIE), 191–196 (KTKPTQ), and lysine 227. UTP is bound by residues 191 to 196 (KTKPTQ) and lysine 227. 243–245 (KDA) serves as a coordination point for ATP. The Glutamine amidotransferase type-1 domain occupies 293 to 525 (VAIVSKYGIE…VEACKKNKSS (233 aa)). Residue glycine 349 coordinates L-glutamine. Cysteine 376 functions as the Nucleophile; for glutamine hydrolysis in the catalytic mechanism. Residues 377–380 (LGFQ), glutamate 400, and arginine 455 contribute to the L-glutamine site. Active-site residues include histidine 498 and glutamate 500.

The protein belongs to the CTP synthase family. Homotetramer.

It carries out the reaction UTP + L-glutamine + ATP + H2O = CTP + L-glutamate + ADP + phosphate + 2 H(+). It catalyses the reaction L-glutamine + H2O = L-glutamate + NH4(+). The catalysed reaction is UTP + NH4(+) + ATP = CTP + ADP + phosphate + 2 H(+). Its pathway is pyrimidine metabolism; CTP biosynthesis via de novo pathway; CTP from UDP: step 2/2. Its activity is regulated as follows. Allosterically activated by GTP, when glutamine is the substrate; GTP has no effect on the reaction when ammonia is the substrate. The allosteric effector GTP functions by stabilizing the protein conformation that binds the tetrahedral intermediate(s) formed during glutamine hydrolysis. Inhibited by the product CTP, via allosteric rather than competitive inhibition. Its function is as follows. Catalyzes the ATP-dependent amination of UTP to CTP with either L-glutamine or ammonia as the source of nitrogen. Regulates intracellular CTP levels through interactions with the four ribonucleotide triphosphates. The sequence is that of CTP synthase from Methanoculleus marisnigri (strain ATCC 35101 / DSM 1498 / JR1).